We begin with the raw amino-acid sequence, 363 residues long: Putative lipoate-protein ligase A (363 aa).

Residues 49–229 (STAKHCLLLY…CFLLHKSHST (181 aa)) enclose the BPL/LPL catalytic domain. ATP-binding positions include Arg-91, 96 to 99 (GTVF), and Lys-152. (R)-lipoate is bound at residue Lys-152.

This sequence belongs to the LplA family. In terms of assembly, monomer.

It localises to the cytoplasm. The catalysed reaction is L-lysyl-[lipoyl-carrier protein] + (R)-lipoate + ATP = N(6)-[(R)-lipoyl]-L-lysyl-[lipoyl-carrier protein] + AMP + diphosphate + H(+). Its pathway is protein modification; protein lipoylation via exogenous pathway; protein N(6)-(lipoyl)lysine from lipoate: step 1/2. The protein operates within protein modification; protein lipoylation via exogenous pathway; protein N(6)-(lipoyl)lysine from lipoate: step 2/2. Its function is as follows. Catalyzes both the ATP-dependent activation of exogenously supplied lipoate to lipoyl-AMP and the transfer of the activated lipoyl onto the lipoyl domains of lipoate-dependent enzymes. The polypeptide is Putative lipoate-protein ligase A (aim22) (Schizosaccharomyces pombe (strain 972 / ATCC 24843) (Fission yeast)).